Consider the following 282-residue polypeptide: Undecaprenyl-diphosphatase (282 aa).

The next 7 helical transmembrane spans lie at 40–60 (GAAF…MYFW), 85–105 (ARMG…GLLF), 115–135 (SLYW…LAEW), 153–173 (IGWK…IPGS), 193–213 (AARF…IFQL), 230–250 (LAAA…FLLS), and 258–278 (TIFI…LSTG).

It belongs to the UppP family.

The protein resides in the cell inner membrane. The enzyme catalyses di-trans,octa-cis-undecaprenyl diphosphate + H2O = di-trans,octa-cis-undecaprenyl phosphate + phosphate + H(+). Catalyzes the dephosphorylation of undecaprenyl diphosphate (UPP). Confers resistance to bacitracin. The protein is Undecaprenyl-diphosphatase of Chlorobium phaeovibrioides (strain DSM 265 / 1930) (Prosthecochloris vibrioformis (strain DSM 265)).